The chain runs to 791 residues: Organellar oligopeptidase A, chloroplastic/mitochondrial (791 aa).

The N-terminal 82 residues, 1–82 (MLMATPTSRA…SSPPSMSSAA (82 aa)), are a transit peptide targeting the chloroplast and mitochondrion. Coiled coils occupy residues 118 to 138 (RPGI…LEKS) and 239 to 259 (DDEK…LSHK). Residue H571 coordinates Zn(2+). E572 is an active-site residue. Zn(2+)-binding residues include H575 and E601. 703 to 709 (HIFAGGY) is a substrate binding site.

It belongs to the peptidase M3 family. Zn(2+) is required as a cofactor.

It localises to the mitochondrion matrix. The protein resides in the plastid. The protein localises to the chloroplast stroma. The catalysed reaction is Hydrolysis of oligopeptides, with broad specificity. Gly or Ala commonly occur as P1 or P1' residues, but more distant residues are also important, as is shown by the fact that Z-Gly-Pro-Gly-|-Gly-Pro-Ala is cleaved, but not Z-(Gly)(5).. Its activity is regulated as follows. Inhibited by salicylic acid. Its function is as follows. Oligopeptidase degrading short peptides from 8 to 23 amino acid residues. Plays a role in the degradation of transit peptides and of peptides derived from other proteolytic events. Does not exhibit a strict cleavage pattern. Binds salicylic acid. The protein is Organellar oligopeptidase A, chloroplastic/mitochondrial of Arabidopsis thaliana (Mouse-ear cress).